Reading from the N-terminus, the 196-residue chain is Glycerol-3-phosphate acyltransferase (196 aa).

The next 4 helical transmembrane spans lie at 3-23 (NAVF…ILVS), 78-98 (VGVV…PVFY), 112-132 (VLLA…IVVF), and 154-174 (WLLL…LLLI).

The protein belongs to the PlsY family. As to quaternary structure, probably interacts with PlsX.

The protein resides in the cell inner membrane. It carries out the reaction an acyl phosphate + sn-glycerol 3-phosphate = a 1-acyl-sn-glycero-3-phosphate + phosphate. The protein operates within lipid metabolism; phospholipid metabolism. Catalyzes the transfer of an acyl group from acyl-phosphate (acyl-PO(4)) to glycerol-3-phosphate (G3P) to form lysophosphatidic acid (LPA). This enzyme utilizes acyl-phosphate as fatty acyl donor, but not acyl-CoA or acyl-ACP. The chain is Glycerol-3-phosphate acyltransferase from Methylobacillus flagellatus (strain ATCC 51484 / DSM 6875 / VKM B-1610 / KT).